Reading from the N-terminus, the 191-residue chain is Vascular endothelial growth factor A (191 aa).

An N-terminal signal peptide occupies residues 1-26 (MNFLLTWIHWGLAALLYFHNAKVLQA). Disulfide bonds link Cys52/Cys94, Cys83/Cys128, and Cys87/Cys130. A glycan (N-linked (GlcNAc...) asparagine) is linked at Asn101.

It belongs to the PDGF/VEGF growth factor family. Homodimer; disulfide-linked. Also found as heterodimer with PGF. As to expression, expressed by the venom gland, and probably other tissues.

It localises to the secreted. Its function is as follows. Growth factor active in angiogenesis, vasculogenesis and endothelial cell growth. Induces endothelial cell proliferation, promotes cell migration, inhibits apoptosis and induces permeabilization of blood vessels. Binds to heparan sulfate and heparin. The chain is Vascular endothelial growth factor A from Bitis gabonica (Gaboon adder).